The chain runs to 133 residues: MSSNSVVYWGTGRRKTSVARVRLVPGNGTITINGRPGDNYLNYNPAYIAAVKAPLETLGLGTEYDILVNVHGGGLTGQSGAIKQGAARALCELSADNRKPLKTEGHLSRDPRAKERRKYGLKKARKAPQFSKR.

A compositionally biased stretch (basic and acidic residues) spans 98–113 (RKPLKTEGHLSRDPRA). The segment at 98 to 133 (RKPLKTEGHLSRDPRAKERRKYGLKKARKAPQFSKR) is disordered. The span at 114–133 (KERRKYGLKKARKAPQFSKR) shows a compositional bias: basic residues.

This sequence belongs to the universal ribosomal protein uS9 family.

In Parasynechococcus marenigrum (strain WH8102), this protein is Small ribosomal subunit protein uS9.